We begin with the raw amino-acid sequence, 184 residues long: Photosystem I assembly protein Ycf4 (184 aa).

2 consecutive transmembrane segments (helical) span residues Phe22 to Ser42 and Ile57 to Ser77.

Belongs to the Ycf4 family.

Its subcellular location is the plastid. It is found in the chloroplast thylakoid membrane. Seems to be required for the assembly of the photosystem I complex. The sequence is that of Photosystem I assembly protein Ycf4 from Capsella bursa-pastoris (Shepherd's purse).